The chain runs to 547 residues: Dihydroxy-acid dehydratase (547 aa).

Asp-78 contributes to the Mg(2+) binding site. Position 119 (Cys-119) interacts with [2Fe-2S] cluster. Residues Asp-120 and Lys-121 each coordinate Mg(2+). The residue at position 121 (Lys-121) is an N6-carboxylysine. Cys-191 contacts [2Fe-2S] cluster. Residue Glu-439 participates in Mg(2+) binding. Ser-464 acts as the Proton acceptor in catalysis.

The protein belongs to the IlvD/Edd family. As to quaternary structure, homodimer. Requires [2Fe-2S] cluster as cofactor. It depends on Mg(2+) as a cofactor.

It catalyses the reaction (2R)-2,3-dihydroxy-3-methylbutanoate = 3-methyl-2-oxobutanoate + H2O. It carries out the reaction (2R,3R)-2,3-dihydroxy-3-methylpentanoate = (S)-3-methyl-2-oxopentanoate + H2O. Its pathway is amino-acid biosynthesis; L-isoleucine biosynthesis; L-isoleucine from 2-oxobutanoate: step 3/4. It participates in amino-acid biosynthesis; L-valine biosynthesis; L-valine from pyruvate: step 3/4. Functions in the biosynthesis of branched-chain amino acids. Catalyzes the dehydration of (2R,3R)-2,3-dihydroxy-3-methylpentanoate (2,3-dihydroxy-3-methylvalerate) into 2-oxo-3-methylpentanoate (2-oxo-3-methylvalerate) and of (2R)-2,3-dihydroxy-3-methylbutanoate (2,3-dihydroxyisovalerate) into 2-oxo-3-methylbutanoate (2-oxoisovalerate), the penultimate precursor to L-isoleucine and L-valine, respectively. The polypeptide is Dihydroxy-acid dehydratase (Methanospirillum hungatei JF-1 (strain ATCC 27890 / DSM 864 / NBRC 100397 / JF-1)).